The sequence spans 233 residues: Small ribosomal subunit protein uS2 (233 aa).

The protein belongs to the universal ribosomal protein uS2 family.

In Bacillus cereus (strain G9842), this protein is Small ribosomal subunit protein uS2.